Reading from the N-terminus, the 580-residue chain is MPSRPLIQLLDTTTINQIAAGEVIENSISVVKELVENALDAGADEIEVETLGGGQGLIVVKDNGCGMSAEDVTLALKRHATSKIGEFSDIFSLSSFGFRGEALPAIASISKMEILSCPRIGEGSRTIIHGGEIIASEAKPRQLGTTISIDSLFYNVPVRRGFQKSPQADRIAMRKLLENRILSIEGVGWSWVSERQQEFHILKHRGFAERVGFVMGEGFMQEALRVDSGERPVCVRGFLGSPGFHRPTRSGQRVFINDRPVDSVFISKQIREAYSMLLPPQRHPVFVLKLYLPPEWCDFNVHPQKTEVRILKEEFVGEFLSESIGEVLARPQESSVSEKTIFSLPALRFFDEHLAERSSVEPLESISLPELSIPPKVPLPFLDKGQDIPTTDGQMQIDWGVSQEVRFLTSLGKIVLAEDSEGVHAIFTEAARKHLFYLALTENQQYNYKSQSFLVPLCLEVTPQEGIFLSSHVEDFKQLGIELSQMGPCIFAIDSAPTFIGEEELKSWILFLAAESHAKVDRKAVALLIKETLTQTVFCKTLRPFDISWLSLLWQIGKPEKAFDGTQIRRLVLDEDFIKE.

It belongs to the DNA mismatch repair MutL/HexB family.

This protein is involved in the repair of mismatches in DNA. It is required for dam-dependent methyl-directed DNA mismatch repair. May act as a 'molecular matchmaker', a protein that promotes the formation of a stable complex between two or more DNA-binding proteins in an ATP-dependent manner without itself being part of a final effector complex. This Chlamydia felis (strain Fe/C-56) (Chlamydophila felis) protein is DNA mismatch repair protein MutL.